Reading from the N-terminus, the 212-residue chain is Uridine kinase (212 aa).

13-20 (GASASGKS) serves as a coordination point for ATP.

The protein belongs to the uridine kinase family.

The protein localises to the cytoplasm. It carries out the reaction uridine + ATP = UMP + ADP + H(+). It catalyses the reaction cytidine + ATP = CMP + ADP + H(+). The protein operates within pyrimidine metabolism; CTP biosynthesis via salvage pathway; CTP from cytidine: step 1/3. It participates in pyrimidine metabolism; UMP biosynthesis via salvage pathway; UMP from uridine: step 1/1. In Shewanella baltica (strain OS223), this protein is Uridine kinase.